The chain runs to 428 residues: Glutamate-1-semialdehyde 2,1-aminomutase (428 aa).

N6-(pyridoxal phosphate)lysine is present on Lys-265.

This sequence belongs to the class-III pyridoxal-phosphate-dependent aminotransferase family. HemL subfamily. As to quaternary structure, homodimer. Pyridoxal 5'-phosphate serves as cofactor.

The protein resides in the cytoplasm. The enzyme catalyses (S)-4-amino-5-oxopentanoate = 5-aminolevulinate. It functions in the pathway porphyrin-containing compound metabolism; protoporphyrin-IX biosynthesis; 5-aminolevulinate from L-glutamyl-tRNA(Glu): step 2/2. In Proteus mirabilis (strain HI4320), this protein is Glutamate-1-semialdehyde 2,1-aminomutase.